We begin with the raw amino-acid sequence, 353 residues long: Protein RecA (353 aa).

Position 67–74 (67–74 (GPESSGKT)) interacts with ATP.

This sequence belongs to the RecA family.

Its subcellular location is the cytoplasm. Its function is as follows. Can catalyze the hydrolysis of ATP in the presence of single-stranded DNA, the ATP-dependent uptake of single-stranded DNA by duplex DNA, and the ATP-dependent hybridization of homologous single-stranded DNAs. It interacts with LexA causing its activation and leading to its autocatalytic cleavage. The polypeptide is Protein RecA (Chlamydia pneumoniae (Chlamydophila pneumoniae)).